A 147-amino-acid chain; its full sequence is Hemoglobin subunit gamma (147 aa).

The 145-residue stretch at 3–147 (NFTAEDKAAI…VASALASRYH (145 aa)) folds into the Globin domain. Residues histidine 64 and histidine 93 each coordinate heme b.

Belongs to the globin family. As to quaternary structure, heterotetramer of two alpha chains and two gamma chains in fetal hemoglobin (Hb F). Red blood cells.

In terms of biological role, gamma chains make up the fetal hemoglobin F, in combination with alpha chains. The chain is Hemoglobin subunit gamma (HBG) from Alouatta seniculus (Red howler monkey).